The sequence spans 206 residues: MPKVPVYNMEGAQVGEIELKDEIFGAPVNKAVLYEVSLMYLANQRRGTHDTKTRGEVSGGGRKPWRQKGTGRARHGSIRSPLWRKGGIVFGPHPRDYSYSVPKKVRRAALKSALSDKVNENNLIVVDSLTFAAPKTKEMIRVLNNLKVNGKTLIVTAGYDEIVEKSARNIPGVSVMTAPSLNALSLLNHDKLIMTRDAVLKVEEVF.

A disordered region spans residues 47 to 77; that stretch reads GTHDTKTRGEVSGGGRKPWRQKGTGRARHGS. The span at 63–77 shows a compositional bias: basic residues; the sequence is KPWRQKGTGRARHGS.

This sequence belongs to the universal ribosomal protein uL4 family. Part of the 50S ribosomal subunit.

One of the primary rRNA binding proteins, this protein initially binds near the 5'-end of the 23S rRNA. It is important during the early stages of 50S assembly. It makes multiple contacts with different domains of the 23S rRNA in the assembled 50S subunit and ribosome. Its function is as follows. Forms part of the polypeptide exit tunnel. This Carboxydothermus hydrogenoformans (strain ATCC BAA-161 / DSM 6008 / Z-2901) protein is Large ribosomal subunit protein uL4.